Consider the following 251-residue polypeptide: Pyrroloquinoline-quinone synthase (251 aa).

This sequence belongs to the PqqC family.

It catalyses the reaction 6-(2-amino-2-carboxyethyl)-7,8-dioxo-1,2,3,4,7,8-hexahydroquinoline-2,4-dicarboxylate + 3 O2 = pyrroloquinoline quinone + 2 H2O2 + 2 H2O + H(+). It participates in cofactor biosynthesis; pyrroloquinoline quinone biosynthesis. Ring cyclization and eight-electron oxidation of 3a-(2-amino-2-carboxyethyl)-4,5-dioxo-4,5,6,7,8,9-hexahydroquinoline-7,9-dicarboxylic-acid to PQQ. The protein is Pyrroloquinoline-quinone synthase of Cronobacter sakazakii (strain ATCC BAA-894) (Enterobacter sakazakii).